The sequence spans 540 residues: V-set and immunoglobulin domain-containing protein 10 (540 aa).

The signal sequence occupies residues 1 to 30 (MAAGGSAPEPRVLVCLGALLAGWVAVGLEA). 4 consecutive Ig-like C2-type domains span residues 31–119 (VVIG…WLQV), 123–215 (PYQI…RKVT), 223–309 (PPPS…VQIR), and 311–404 (PSLL…IWLS). The Extracellular segment spans residues 31–413 (VVIGEVHENV…SVKEPLNIGG (383 aa)). N-linked (GlcNAc...) asparagine glycans are attached at residues asparagine 39, asparagine 46, asparagine 70, asparagine 108, asparagine 138, asparagine 171, asparagine 180, and asparagine 198. Cysteine 44 and cysteine 103 are oxidised to a cystine. Intrachain disulfides connect cysteine 153-cysteine 201 and cysteine 245-cysteine 290. A glycan (N-linked (GlcNAc...) asparagine) is linked at asparagine 326. Residues cysteine 331 and cysteine 388 are joined by a disulfide bond. The helical transmembrane segment at 414–434 (IVGTIVSLLLLGLAIISGLLL) threads the bilayer. The Cytoplasmic segment spans residues 435 to 540 (HYSPVFCWKV…DIVQEEDRPV (106 aa)). Positions 461-477 (DSEEEEEEEEEEEEDAA) are enriched in acidic residues. 2 disordered regions span residues 461-500 (DSEEEEEEEEEEEEDAAVGEQEGAREREELPKEIPKQDHI) and 513-540 (QMGNGFQDLQDDSSEEQSDIVQEEDRPV). Basic and acidic residues predominate over residues 482-500 (EGAREREELPKEIPKQDHI). A compositionally biased stretch (acidic residues) spans 521-534 (LQDDSSEEQSDIVQ).

It is found in the membrane. The protein is V-set and immunoglobulin domain-containing protein 10 (VSIG10) of Homo sapiens (Human).